Reading from the N-terminus, the 343-residue chain is Sorbitol dehydrogenase (343 aa).

A disordered region spans residues 1–26; the sequence is MKALVKTQHGTGHFAVQEKPEPTPGK. 3 residues coordinate Zn(2+): Cys-39, His-60, and Glu-61. Glu-146 is a substrate binding site. NAD(+) contacts are provided by residues Ile-174, Arg-200, and 262–264; that span reads VGL.

Belongs to the zinc-containing alcohol dehydrogenase family. As to quaternary structure, homotetramer. The cofactor is Zn(2+).

The catalysed reaction is keto-D-fructose + NADH + H(+) = D-sorbitol + NAD(+). It catalyses the reaction xylitol + NAD(+) = D-xylulose + NADH + H(+). The enzyme catalyses L-iditol + NAD(+) = keto-L-sorbose + NADH + H(+). Polyol dehydrogenase that catalyzes the NAD(+)-dependent oxidation of various sugar alcohols. Is active with D-sorbitol (D-glucitol), xylitol and L-iditol as substrates, leading to the C2-oxidized products D-fructose, D-xylulose and L-sorbose, respectively. The protein is Sorbitol dehydrogenase (gutB) of Halalkalibacterium halodurans (strain ATCC BAA-125 / DSM 18197 / FERM 7344 / JCM 9153 / C-125) (Bacillus halodurans).